The chain runs to 497 residues: Guanosine-5'-triphosphate,3'-diphosphate pyrophosphatase (497 aa).

The protein belongs to the GppA/Ppx family. GppA subfamily.

The enzyme catalyses guanosine 3'-diphosphate 5'-triphosphate + H2O = guanosine 3',5'-bis(diphosphate) + phosphate + H(+). The protein operates within purine metabolism; ppGpp biosynthesis; ppGpp from GTP: step 2/2. Functionally, catalyzes the conversion of pppGpp to ppGpp. Guanosine pentaphosphate (pppGpp) is a cytoplasmic signaling molecule which together with ppGpp controls the 'stringent response', an adaptive process that allows bacteria to respond to amino acid starvation, resulting in the coordinated regulation of numerous cellular activities. The polypeptide is Guanosine-5'-triphosphate,3'-diphosphate pyrophosphatase (Vibrio campbellii (strain ATCC BAA-1116)).